The chain runs to 179 residues: Probable splicing factor, arginine/serine-rich 6 (179 aa).

The RRM domain occupies 3–76 (AKVYVGGLPS…VRARVELSTG (74 aa)). The interval 75 to 179 (TGQRRGGGGR…RSRSRSASPH (105 aa)) is disordered. The segment covering 78–93 (RRGGGGRGGGFGGRGG) has biased composition (gly residues). The segment covering 94–160 (GGRDRSPYRG…RSPQERDRSH (67 aa)) has biased composition (basic and acidic residues). Over residues 161 to 173 (SKSRSRSRSRSRS) the composition is skewed to basic residues.

It belongs to the splicing factor SR family. In terms of processing, extensively phosphorylated on serine residues in the RS domain.

It localises to the nucleus. Plays a functionally redundant role in shifting germ cell sexual differentiation in hermaprodites. Required for the development of somatic gonad structures and for progression from larval stage to adulthood. This chain is Probable splicing factor, arginine/serine-rich 6 (rsp-6), found in Caenorhabditis elegans.